Consider the following 215-residue polypeptide: 3-demethoxyubiquinol 3-hydroxylase (215 aa).

Residues Glu-64, Glu-94, His-97, Glu-146, Glu-178, and His-181 each coordinate Fe cation.

Belongs to the COQ7 family. It depends on Fe cation as a cofactor.

It is found in the cell membrane. The catalysed reaction is a 5-methoxy-2-methyl-3-(all-trans-polyprenyl)benzene-1,4-diol + AH2 + O2 = a 3-demethylubiquinol + A + H2O. It participates in cofactor biosynthesis; ubiquinone biosynthesis. Functionally, catalyzes the hydroxylation of 2-nonaprenyl-3-methyl-6-methoxy-1,4-benzoquinol during ubiquinone biosynthesis. The sequence is that of 3-demethoxyubiquinol 3-hydroxylase from Pseudomonas fluorescens (strain SBW25).